The following is a 75-amino-acid chain: Small ribosomal subunit protein bS18 (75 aa).

Belongs to the bacterial ribosomal protein bS18 family. Part of the 30S ribosomal subunit. Forms a tight heterodimer with protein bS6.

Its function is as follows. Binds as a heterodimer with protein bS6 to the central domain of the 16S rRNA, where it helps stabilize the platform of the 30S subunit. This chain is Small ribosomal subunit protein bS18, found in Cellvibrio japonicus (strain Ueda107) (Pseudomonas fluorescens subsp. cellulosa).